The following is a 220-amino-acid chain: Glycerol-3-phosphate acyltransferase (220 aa).

Helical transmembrane passes span 11-31 (INVIFTLLGYLIGGIPFGYAL), 70-90 (LLVLILDLFKGMFAVFLSKLF), 96-116 (LQWMVAIASILGHCYSPFLNF), 127-147 (GSVVLLIPIESLIGLTVWFFV), 153-173 (ISSLASILGVGTATVLIFFVP), and 193-213 (MVLIFIFTLIKHAGNIFNLLA).

This sequence belongs to the PlsY family. As to quaternary structure, probably interacts with PlsX.

It is found in the cell inner membrane. The catalysed reaction is an acyl phosphate + sn-glycerol 3-phosphate = a 1-acyl-sn-glycero-3-phosphate + phosphate. The protein operates within lipid metabolism; phospholipid metabolism. Functionally, catalyzes the transfer of an acyl group from acyl-phosphate (acyl-PO(4)) to glycerol-3-phosphate (G3P) to form lysophosphatidic acid (LPA). This enzyme utilizes acyl-phosphate as fatty acyl donor, but not acyl-CoA or acyl-ACP. This Helicobacter pylori (strain ATCC 700392 / 26695) (Campylobacter pylori) protein is Glycerol-3-phosphate acyltransferase.